The primary structure comprises 2521 residues: Piezo-type mechanosensitive ion channel component 1 (2521 aa).

Topologically, residues 1 to 12 (MEPHVLGAVLYW) are cytoplasmic. The chain crosses the membrane as a helical span at residues 13 to 25 (LLLPCALLAACLL). The Extracellular portion of the chain corresponds to 26-28 (RFS). Residues 29-44 (GLSLVYLLFLLLLPWF) traverse the membrane as a helical segment. The Cytoplasmic segment spans residues 45-58 (PGPTRCGLQGHTGR). A helical membrane pass occupies residues 59 to 81 (LLRALLGLSLLFLVAHLALQICL). Residues 82–121 (HIVPRLDQLLGPSCSRWETLSRHIGVTRLDLKDIPNAIRL) lie on the Extracellular side of the membrane. Residues 122–138 (VAPDLGILVVSSVCLGI) form a helical membrane-spanning segment. The Cytoplasmic segment spans residues 139 to 194 (CGRLARNTRQSPHPRELDDDERDVDASPTAGLQEAATLAPTRRSRLAARFRVTAHW). A helical membrane pass occupies residues 195–214 (LLVAAGRVLAVTLLALAGIA). At 215-216 (HP) the chain is on the extracellular side. Residues 217–236 (SALSSVYLLLFLALCTWWAC) form a helical membrane-spanning segment. Over 237–247 (HFPISTRGFSR) the chain is Cytoplasmic. Residues 248–268 (LCVAVGCFGAGHLICLYCYQM) form a helical membrane-spanning segment. The Extracellular segment spans residues 269–309 (PLAQALLPPAGIWARVLGLKDFVGPTNCSSPHALVLNTGLD). N295 carries N-linked (GlcNAc...) asparagine glycosylation. A helical membrane pass occupies residues 310 to 330 (WPVYASPGVLLLLCYATASLR). At 331–417 (KLRAYRPSGQ…EASPLHSLGH (87 aa)) the chain is on the cytoplasmic side. The chain crosses the membrane as a helical span at residues 418–438 (LIMDQSYVCALIAMMVWSITY). Residues 439 to 440 (HS) are Extracellular-facing. A helical transmembrane segment spans residues 441–456 (WLTFVLLLWACLIWTV). Topologically, residues 457–461 (RSRHQ) are cytoplasmic. A helical membrane pass occupies residues 462 to 484 (LAMLCSPCILLYGMTLCCLRYVW). Residues 485 to 512 (AMDLRPELPTTLGPVSLRQLGLEHTRYP) lie on the Extracellular side of the membrane. A helical transmembrane segment spans residues 513-530 (CLDLGAMLLYTLTFWLLL). The Cytoplasmic segment spans residues 531-574 (RQFVKEKLLKWAESPAALTEVTVADTEPTRTQTLLQSLGELVKG). A helical membrane pass occupies residues 575-595 (VYAKYWIYVCAGMFIVVSFAG). A topological domain (extracellular) is located at residue R596. Residues 597–617 (LVVYKIVYMFLFLLCLTLFQV) traverse the membrane as a helical segment. Residues 618–627 (YYSLWRKLLK) lie on the Cytoplasmic side of the membrane. The chain crosses the membrane as a helical span at residues 628–649 (AFWWLVVAYTMLVLIAVYTFQF). The Extracellular segment spans residues 650–679 (QDFPAYWRNLTGFTDEQLGDLGLEQFSVSE). A helical membrane pass occupies residues 680 to 696 (LFSSILVPGFFLLACIL). Over 697-816 (QLHYFHRPFM…RRLLELHVFK (120 aa)) the chain is Cytoplasmic. Phosphothreonine is present on T734. Positions 738 to 769 (REEQQEHQQQQQEEEEEEEDSRDEGLGVATPH) are disordered. The segment covering 749–759 (QEEEEEEEDSR) has biased composition (acidic residues). S758 bears the Phosphoserine mark. Residues 817–828 (LVALYTVWVALK) form a helical membrane-spanning segment. The Extracellular portion of the chain corresponds to 829–831 (EVS). The chain crosses the membrane as a helical span at residues 832 to 845 (VMNLLLVVLWAFAL). The Cytoplasmic segment spans residues 846–859 (PYPRFRPMASCLST). The helical transmembrane segment at 860–874 (VWTCVIIVCKMLYQL) threads the bilayer. The Extracellular segment spans residues 875–926 (KVVNPQEYSSNCTEPFPNSTNLLPTEISQSLLYRGPVDPANWFGVRKGFPNL). A helical transmembrane segment spans residues 927–954 (GYIQNHLQVLLLLVFEAIVYRRQEHYRR). At 955-994 (QHQLAPLPAQAVFASGTRQQLDQDLLGCLKYFINFFFYKF) the chain is on the cytoplasmic side. Residues 995–1010 (GLEICFLMAVNVIGQR) traverse the membrane as a helical segment. At 1011–1012 (MN) the chain is on the extracellular side. A helical transmembrane segment spans residues 1013 to 1028 (FLVTLHGCWLVAILTR). Topologically, residues 1029–1041 (RHRQAIARLWPNY) are cytoplasmic. Residues 1042 to 1057 (CLFLALFLLYQYLLCL) traverse the membrane as a helical segment. Residues 1058-1096 (GMPPALCIDYPWRWSRAVPMNSALIKWLYLPDFFRAPNS) are Extracellular-facing. The chain crosses the membrane as a helical span at residues 1097-1118 (TNLISDFLLLLCASQQWQVFSA). Over 1119–1153 (ERTEEWQRMAGVNTDRLEPLRGEPNPVPNFIHCRS) the chain is Cytoplasmic. Residues 1154-1180 (YLDMLKVAVFRYLFWLVLVVVFVTGAT) traverse the membrane as a helical segment. The Extracellular segment spans residues 1181–1185 (RISIF). Residues 1186 to 1204 (GLGYLLACFYLLLFGTALL) form a helical membrane-spanning segment. The Cytoplasmic portion of the chain corresponds to 1205 to 1217 (QRDTRARLVLWDC). The helical transmembrane segment at 1218–1236 (LILYNVTVIISKNMLSLLA) threads the bilayer. Topologically, residues 1237–1285 (CVFVEQMQTGFCWVIQLFSLVCTVKGYYDPKEMMDRDQDCLLPVEEAGI) are extracellular. A helical membrane pass occupies residues 1286–1302 (IWDSVCFFFLLLQRRVF). The Cytoplasmic segment spans residues 1303–1656 (LSHYYLHVRA…ELLLDRRLRI (354 aa)). The stretch at 1339-1368 (HRRIEEKSLAQLKRQMERIRAKQEKHRQGR) forms a coiled coil. 3 disordered regions span residues 1356-1402 (RIRA…RRQW), 1462-1498 (RQQE…EAAA), and 1576-1630 (TLPG…DPGE). The segment covering 1385–1398 (LEPGPDSPGGSSPP) has biased composition (low complexity). Phosphoserine is present on residues S1391 and S1396. Phosphoserine occurs at positions 1636 and 1646. A helical membrane pass occupies residues 1657–1700 (PELEEAELFAEGQGRALRLLRAVYQCVAAHSELLCYFIIILNHM). The Extracellular segment spans residues 1701–1704 (VTAS). The helical transmembrane segment at 1705 to 1720 (AGSLVLPVLVFLWAML) threads the bilayer. Topologically, residues 1721–1728 (SIPRPSKR) are cytoplasmic. Residues 1729–1747 (FWMTAIVFTEIAVVVKYLF) form a helical membrane-spanning segment. Over 1748 to 1779 (QFGFFPWNSHVVLRRYENKPYFPPRILGLEKT) the chain is Extracellular. A helical transmembrane segment spans residues 1780–1801 (DGYIKYDLVQLMALFFHRSQLL). At 1802–1960 (CYGLWDHEED…HTKYRAATDV (159 aa)) the chain is on the cytoplasmic side. Basic and acidic residues predominate over residues 1811 to 1822 (DSPSKEHDKSGE). A disordered region spans residues 1811 to 1921 (DSPSKEHDKS…RPSRSGGRVR (111 aa)). T1854 is subject to Phosphothreonine. Positions 1859–1868 (VELRPRDTRR) are enriched in basic and acidic residues. Over residues 1869–1878 (ISLRFRRRKK) the composition is skewed to basic residues. The segment covering 1890–1903 (EAEDREEEEGEEEK) has biased composition (acidic residues). Basic and acidic residues predominate over residues 1904–1913 (EAPTGREKRP). A helical membrane pass occupies residues 1961 to 1980 (YALMFLADVVDFIIIIFGFW). Residues 1981–2000 (AFGKHSAATDITSSLSDDQV) lie on the Extracellular side of the membrane. Residues 2001–2017 (PEAFLVMLLIQFSTMVV) form a helical membrane-spanning segment. Topologically, residues 2018–2031 (DRALYLRKTVLGKL) are cytoplasmic. The helical transmembrane segment at 2032–2052 (AFQVALVLAIHLWMFFILPAV) threads the bilayer. Residues 2053 to 2060 (TERMFNQN) lie on the Extracellular side of the membrane. The helical transmembrane segment at 2061–2076 (VVAQLWYFVKCIYFAL) threads the bilayer. Topologically, residues 2077 to 2176 (SAYQIRCGYP…KKKIVKYGMG (100 aa)) are cytoplasmic. A helical transmembrane segment spans residues 2177-2197 (GLIILFLIAIIWFPLLFMSLV). The Extracellular segment spans residues 2198 to 2431 (RSVVGVVNQP…IFSDKVSPPS (234 aa)). A glycan (N-linked (GlcNAc...) asparagine) is linked at N2294. C2411 and C2415 form a disulfide bridge. The chain crosses the membrane as a helical span at residues 2432–2452 (LGFLAGYGIMGLYVSIVLVIG). The Cytoplasmic segment spans residues 2453 to 2521 (KFVRGFFSEI…TMIKWTREKE (69 aa)).

This sequence belongs to the PIEZO (TC 1.A.75) family. Homotrimer; the homotrimer forms a propeller-shaped Piezo channel with a cation-ion conducting pore. Heterotrimeric interaction may occur between PIEZO1 and PIEZO2. Interacts with PKD2. Interacts with STOML3. Interacts with TMC1, TMC2, PCDH15 and CIB2; the interaction may be part of the MET complex. Interacts with MDFIC (via C-terminus); the interaction prolongs Piezo channel inactivation. Interacts with MDFI (via C-terminus); the interaction prolongs Piezo channel inactivation. Expressed in numerous tissues. In normal brain, expressed exclusively in neurons, not in astrocytes. In Alzheimer disease brains, expressed in about half of the activated astrocytes located around classical senile plaques. In Parkinson disease substantia nigra, not detected in melanin-containing neurons nor in activated astrocytes. Expressed in erythrocytes (at protein level). Expressed in myoblasts (at protein level).

It localises to the endoplasmic reticulum membrane. The protein localises to the endoplasmic reticulum-Golgi intermediate compartment membrane. It is found in the cell membrane. The protein resides in the cell projection. Its subcellular location is the lamellipodium membrane. It carries out the reaction K(+)(in) = K(+)(out). It catalyses the reaction Na(+)(in) = Na(+)(out). The enzyme catalyses Ca(2+)(in) = Ca(2+)(out). The catalysed reaction is Mg(2+)(in) = Mg(2+)(out). Regulated by auxillary subunits MDFIC and MDFI. Down-regulated by phosphatidylserines exposed on the cell surface. Divalent ions decrease the single-channel permeability of K(+). Pore-forming subunit of the mechanosensitive non-specific cation Piezo channel required for rapidly adapting mechanically activated (MA) currents and has a key role in sensing touch and tactile pain. Piezo channels are homotrimeric three-blade propeller-shaped structures that utilize a cap-motion and plug-and-latch mechanism to gate their ion-conducting pathways. Generates currents characterized by a linear current-voltage relationship that are sensitive to ruthenium red and gadolinium. Conductance to monovalent alkali ions is highest for K(+), intermediate for Na(+) and lowest for Li(+). Divalent ions except for Mn(2+) permeate the channel but more slowly than the monovalent ions and they also reduce K(+) currents. Plays a key role in epithelial cell adhesion by maintaining integrin activation through R-Ras recruitment to the ER, most probably in its activated state, and subsequent stimulation of calpain signaling. In inner ear hair cells, PIEZO1/2 subunits may constitute part of the mechanotransducer (MET) non-selective cation channel complex where they may act as pore-forming ion-conducting component in the complex. In the kidney, may contribute to the detection of intraluminal pressure changes and to urine flow sensing. Acts as a shear-stress sensor that promotes endothelial cell organization and alignment in the direction of blood flow through calpain activation. Plays a key role in blood vessel formation and vascular structure in both development and adult physiology. Acts as a sensor of phosphatidylserine (PS) flipping at the plasma membrane and governs morphogenesis of muscle cells. In myoblasts, flippase-mediated PS enrichment at the inner leaflet of plasma membrane triggers channel activation and Ca2+ influx followed by Rho GTPases signal transduction, leading to assembly of cortical actomyosin fibers and myotube formation. The protein is Piezo-type mechanosensitive ion channel component 1 of Homo sapiens (Human).